Consider the following 329-residue polypeptide: Biotin--protein ligase 2 (329 aa).

Positions 67–251 (ISTHRFGRFL…KFENFFDLFM (185 aa)) constitute a BPL/LPL catalytic domain. Residues 84–85 (ST), Q107, 111–113 (RGR), and K182 each bind biotin.

It belongs to the biotin--protein ligase family. Highly expressed in seeds. Expressed in roots, leaves, stems, flowers and siliques.

Its subcellular location is the cytoplasm. Seems to have no or limited implication in biotin-dependent carboxylase biotinylation in planta. The sequence is that of Biotin--protein ligase 2 (HCS2) from Arabidopsis thaliana (Mouse-ear cress).